The chain runs to 274 residues: Hydroxyethylthiazole kinase (274 aa).

Residue methionine 49 participates in substrate binding. 2 residues coordinate ATP: arginine 125 and threonine 173. Glycine 200 is a substrate binding site.

Belongs to the Thz kinase family. Mg(2+) is required as a cofactor.

It carries out the reaction 5-(2-hydroxyethyl)-4-methylthiazole + ATP = 4-methyl-5-(2-phosphooxyethyl)-thiazole + ADP + H(+). The protein operates within cofactor biosynthesis; thiamine diphosphate biosynthesis; 4-methyl-5-(2-phosphoethyl)-thiazole from 5-(2-hydroxyethyl)-4-methylthiazole: step 1/1. Its function is as follows. Catalyzes the phosphorylation of the hydroxyl group of 4-methyl-5-beta-hydroxyethylthiazole (THZ). This chain is Hydroxyethylthiazole kinase, found in Desulfosudis oleivorans (strain DSM 6200 / JCM 39069 / Hxd3) (Desulfococcus oleovorans).